Reading from the N-terminus, the 91-residue chain is Small ribosomal subunit protein uS19 (91 aa).

It belongs to the universal ribosomal protein uS19 family.

Functionally, protein S19 forms a complex with S13 that binds strongly to the 16S ribosomal RNA. The polypeptide is Small ribosomal subunit protein uS19 (Ralstonia pickettii (strain 12J)).